The chain runs to 331 residues: Chitin synthase export chaperone (331 aa).

Helical transmembrane passes span 52 to 72, 84 to 104, 113 to 133, 150 to 170, 184 to 204, 219 to 239, and 249 to 269; these read GAAS…ILHI, IITF…IDAG, FPWF…SLLV, VWLL…ISIL, LAMF…YLVM, LGHI…MYAF, and HYLD…MMVY.

This sequence belongs to the CHS7 family. In terms of assembly, interacts with chs3.

The protein resides in the endoplasmic reticulum membrane. Chaperone required for the export of the chitin synthase chs3 from the endoplasmic reticulum. This chain is Chitin synthase export chaperone (chs7), found in Emericella nidulans (strain FGSC A4 / ATCC 38163 / CBS 112.46 / NRRL 194 / M139) (Aspergillus nidulans).